We begin with the raw amino-acid sequence, 151 residues long: Cytochrome c-type biogenesis protein CcmE (151 aa).

Residues 1–8 are Cytoplasmic-facing; it reads MNPLRKKR. A helical; Signal-anchor for type II membrane protein membrane pass occupies residues 9 to 29; it reads LLIILAILVGVGIAVGLALSA. The Periplasmic portion of the chain corresponds to 30–151; sequence LKENINLFYT…QSAPTPAKEG (122 aa). His124 and Tyr128 together coordinate heme. The interval 131–151 is disordered; it reads PEVTKALKDSGQSAPTPAKEG.

Belongs to the CcmE/CycJ family.

It localises to the cell inner membrane. Functionally, heme chaperone required for the biogenesis of c-type cytochromes. Transiently binds heme delivered by CcmC and transfers the heme to apo-cytochromes in a process facilitated by CcmF and CcmH. This chain is Cytochrome c-type biogenesis protein CcmE, found in Pseudomonas fluorescens (strain ATCC BAA-477 / NRRL B-23932 / Pf-5).